We begin with the raw amino-acid sequence, 169 residues long: Adenine phosphoribosyltransferase (169 aa).

It belongs to the purine/pyrimidine phosphoribosyltransferase family. Homodimer.

The protein resides in the cytoplasm. It catalyses the reaction AMP + diphosphate = 5-phospho-alpha-D-ribose 1-diphosphate + adenine. The protein operates within purine metabolism; AMP biosynthesis via salvage pathway; AMP from adenine: step 1/1. Its function is as follows. Catalyzes a salvage reaction resulting in the formation of AMP, that is energically less costly than de novo synthesis. In Mycoplasmopsis synoviae (strain 53) (Mycoplasma synoviae), this protein is Adenine phosphoribosyltransferase.